A 169-amino-acid polypeptide reads, in one-letter code: FAM231A/C-like protein LOC102723383 (169 aa).

The segment at 82 to 140 (LIRSGSSQNESQEDQGAGLISQAGLKADNRRESSTWANEVEDRRPQCTPALNLTPSHPH) is disordered.

Belongs to the FAM231 family.

The polypeptide is FAM231A/C-like protein LOC102723383 (Homo sapiens (Human)).